The primary structure comprises 334 residues: uncharacterized protein (334 aa).

This sequence belongs to the PAPS reductase family.

This is an uncharacterized protein from Escherichia phage 186 (Bacteriophage 186).